The chain runs to 256 residues: Undecaprenyl-diphosphatase (256 aa).

The next 8 membrane-spanning stretches (helical) occupy residues 5–25 (IIEIIILSIVQGISEFLPISS), 41–61 (NSLMIDVSLHLGSLLAIVFYF), 74–94 (LLSLLIIGSIPIVIAGYVISS), 100–120 (LLENNLKIIAWTTLIFGIILY), 135–155 (LNFKTILYIGLFQILALIPGV), 180–200 (FLLAIPAIAGASVLQLKNAIG), 208–228 (LVLISITLSFLFSYFTVKFFL), and 234–254 (FSLNVFVIYRIIISIILFIII).

This sequence belongs to the UppP family.

The protein resides in the cell inner membrane. It catalyses the reaction di-trans,octa-cis-undecaprenyl diphosphate + H2O = di-trans,octa-cis-undecaprenyl phosphate + phosphate + H(+). Catalyzes the dephosphorylation of undecaprenyl diphosphate (UPP). Confers resistance to bacitracin. The protein is Undecaprenyl-diphosphatase of Pelagibacter ubique (strain HTCC1062).